The primary structure comprises 537 residues: Beta-arabinofuranosyltransferase RAY1 (537 aa).

The DXD motif motif lies at 370-372 (DVD).

The protein belongs to the glycosyltransferase 77 family.

Its function is as follows. Beta-arabinofuranosyltransferase that transfers specifically an arabinosyl residue from UDP-arabinofuranose to the monosaccharide galactose or beta-methyl-galactoside in vitro. Catalyzes the addition of a beta-arabinofuranose residue onto a beta-galactosyl residue of an Yariv-precipitable wall polymer in vivo. This chain is Beta-arabinofuranosyltransferase RAY1, found in Arabidopsis thaliana (Mouse-ear cress).